Here is a 141-residue protein sequence, read N- to C-terminus: Nucleoside diphosphate kinase (141 aa).

Positions 11, 59, 87, 93, 104, and 114 each coordinate ATP. Histidine 117 serves as the catalytic Pros-phosphohistidine intermediate.

It belongs to the NDK family. Homotetramer. It depends on Mg(2+) as a cofactor.

It is found in the cytoplasm. The enzyme catalyses a 2'-deoxyribonucleoside 5'-diphosphate + ATP = a 2'-deoxyribonucleoside 5'-triphosphate + ADP. It carries out the reaction a ribonucleoside 5'-diphosphate + ATP = a ribonucleoside 5'-triphosphate + ADP. Its function is as follows. Major role in the synthesis of nucleoside triphosphates other than ATP. The ATP gamma phosphate is transferred to the NDP beta phosphate via a ping-pong mechanism, using a phosphorylated active-site intermediate. The sequence is that of Nucleoside diphosphate kinase from Halorhodospira halophila (strain DSM 244 / SL1) (Ectothiorhodospira halophila (strain DSM 244 / SL1)).